Here is a 542-residue protein sequence, read N- to C-terminus: 3-(3-hydroxy-phenyl)propionate/3-hydroxycinnamic acid hydroxylase (542 aa).

FAD is bound by residues 10–39 and 278–288; these read SVAI…VVER and FVAGRVALIGD.

The protein belongs to the PheA/TfdB FAD monooxygenase family. FAD serves as cofactor.

The catalysed reaction is 3-(3-hydroxyphenyl)propanoate + NADH + O2 + H(+) = 3-(2,3-dihydroxyphenyl)propanoate + NAD(+) + H2O. It catalyses the reaction (2E)-3-(3-hydroxyphenyl)prop-2-enoate + NADH + O2 + H(+) = (2E)-3-(2,3-dihydroxyphenyl)prop-2-enoate + NAD(+) + H2O. The protein operates within aromatic compound metabolism; 3-phenylpropanoate degradation. Functionally, catalyzes the insertion of one atom of molecular oxygen into position 2 of the phenyl ring of 3-(3-hydroxyphenyl)propionate (3-HPP) and hydroxycinnamic acid (3HCI). The sequence is that of 3-(3-hydroxy-phenyl)propionate/3-hydroxycinnamic acid hydroxylase from Burkholderia cenocepacia (strain HI2424).